A 78-amino-acid polypeptide reads, in one-letter code: uncharacterized protein (78 aa).

2 helical membrane passes run 12–32 and 51–71; these read LVSV…ICVV and GVGA…VAVH.

The protein resides in the cell membrane. This is an uncharacterized protein from Treponema pallidum (strain Nichols).